Consider the following 148-residue polypeptide: Large ribosomal subunit protein bL9 (148 aa).

Belongs to the bacterial ribosomal protein bL9 family.

In terms of biological role, binds to the 23S rRNA. The chain is Large ribosomal subunit protein bL9 from Listeria innocua serovar 6a (strain ATCC BAA-680 / CLIP 11262).